Consider the following 90-residue polypeptide: Envelope glycoprotein N (90 aa).

The N-terminal stretch at 1-21 (MTWKLFICFLSFGVIFLRVSS) is a signal peptide. The Virion surface portion of the chain corresponds to 22–55 (LTEKSHTTSYTILHNNNFYSNSCSADTYVPSIKT). The helical transmembrane segment at 56 to 76 (FSSVWAILNVIIFFCASLFYL) threads the bilayer. Topologically, residues 77 to 90 (RHLCIVKFISNLTK) are intravirion.

This sequence belongs to the herpesviridae glycoprotein N family. Interacts (via N-terminus) with gM (via N-terminus). The gM-gN heterodimer forms the gCII complex.

Its subcellular location is the virion membrane. The protein localises to the host membrane. It localises to the host Golgi apparatus. It is found in the host trans-Golgi network. Envelope glycoprotein necessary for proper maturation of gM and modulation of its membrane fusion activity. Also plays a critical role in virion morphogenesis. In Saimiriine herpesvirus 2 (strain 11) (SaHV-2), this protein is Envelope glycoprotein N.